Consider the following 276-residue polypeptide: 3-methyl-2-oxobutanoate hydroxymethyltransferase (276 aa).

Mg(2+) is bound by residues D45 and D84. 3-methyl-2-oxobutanoate contacts are provided by residues 45 to 46, D84, and K114; that span reads DS. Residue E116 participates in Mg(2+) binding. E183 serves as the catalytic Proton acceptor.

It belongs to the PanB family. As to quaternary structure, homodecamer; pentamer of dimers. It depends on Mg(2+) as a cofactor.

It is found in the cytoplasm. It carries out the reaction 3-methyl-2-oxobutanoate + (6R)-5,10-methylene-5,6,7,8-tetrahydrofolate + H2O = 2-dehydropantoate + (6S)-5,6,7,8-tetrahydrofolate. The protein operates within cofactor biosynthesis; (R)-pantothenate biosynthesis; (R)-pantoate from 3-methyl-2-oxobutanoate: step 1/2. Functionally, catalyzes the reversible reaction in which hydroxymethyl group from 5,10-methylenetetrahydrofolate is transferred onto alpha-ketoisovalerate to form ketopantoate. The chain is 3-methyl-2-oxobutanoate hydroxymethyltransferase from Syntrophomonas wolfei subsp. wolfei (strain DSM 2245B / Goettingen).